The following is a 190-amino-acid chain: Protein GrpE (190 aa).

Belongs to the GrpE family. In terms of assembly, homodimer.

The protein localises to the cytoplasm. In terms of biological role, participates actively in the response to hyperosmotic and heat shock by preventing the aggregation of stress-denatured proteins, in association with DnaK and GrpE. It is the nucleotide exchange factor for DnaK and may function as a thermosensor. Unfolded proteins bind initially to DnaJ; upon interaction with the DnaJ-bound protein, DnaK hydrolyzes its bound ATP, resulting in the formation of a stable complex. GrpE releases ADP from DnaK; ATP binding to DnaK triggers the release of the substrate protein, thus completing the reaction cycle. Several rounds of ATP-dependent interactions between DnaJ, DnaK and GrpE are required for fully efficient folding. In Streptococcus agalactiae serotype III (strain NEM316), this protein is Protein GrpE.